The following is a 423-amino-acid chain: CinA-like protein (423 aa).

This sequence belongs to the CinA family.

The polypeptide is CinA-like protein (Prochlorococcus marinus (strain SARG / CCMP1375 / SS120)).